A 122-amino-acid chain; its full sequence is MIQQESQLKVADNTGAKRVKCFKVLGGSRRRYATVGDVIVCSVRDVEPDSSVKKGDVVKAVIVRTRRNILRKDGSSLKFDTNSCVIIDEKGNPKGTRIFGPIAREIRDRGFVKISSLAPEVI.

This sequence belongs to the universal ribosomal protein uL14 family. As to quaternary structure, part of the 50S ribosomal subunit. Forms a cluster with proteins L3 and L19. In the 70S ribosome, L14 and L19 interact and together make contacts with the 16S rRNA in bridges B5 and B8.

Functionally, binds to 23S rRNA. Forms part of two intersubunit bridges in the 70S ribosome. The chain is Large ribosomal subunit protein uL14 from Chlamydia abortus (strain DSM 27085 / S26/3) (Chlamydophila abortus).